Here is a 622-residue protein sequence, read N- to C-terminus: Apical membrane antigen 1 (622 aa).

Positions 1–24 (MRKLYCVLLLSAFEFTYMINFGRG) are cleaved as a signal peptide. Residues 25 to 546 (QNYWEHPYQK…EHKPTYDKMK (522 aa)) are Extracellular-facing. Intrachain disulfides connect Cys149–Cys302, Cys217–Cys247, Cys263–Cys275, Cys320–Cys418, and Cys337–Cys409. N-linked (GlcNAc...) asparagine glycosylation is present at Asn162. N-linked (GlcNAc...) asparagine glycans are attached at residues Asn286, Asn371, Asn421, Asn422, and Asn499. Disulfide bonds link Cys443/Cys502, Cys490/Cys507, and Cys492/Cys509. A helical transmembrane segment spans residues 547-567 (IIIASSAAVAVLATILMVYLY). The Cytoplasmic portion of the chain corresponds to 568-622 (KRKGNAEKYDKMDEPQHYGKSNSRNDEMLDPEASFWGEEKRASHTTPVLMEKPYY). The span at 578 to 594 (KMDEPQHYGKSNSRNDE) shows a compositional bias: basic and acidic residues. Positions 578–607 (KMDEPQHYGKSNSRNDEMLDPEASFWGEEK) are disordered.

The protein belongs to the apicomplexan parasites AMA1 family.

Its subcellular location is the membrane. Its function is as follows. Involved in parasite invasion of erythrocytes. This chain is Apical membrane antigen 1 (AMA-1), found in Plasmodium falciparum (isolate FC27 / Papua New Guinea).